The primary structure comprises 652 residues: MSQIHKHTIPANIADRCLINPQQYEAMYQQSINAPDTFWGEQGKILDWIKPYQKVKNTSFAPGNVSIKWYEDGTLNLAANCLDRHLQENGDRTAIIWEGDDASQSKHISYKELHRDVCRFANTLLKLGIKKGDVVAIYMPMVPEAAVAMLACARIGAVHSVIFGGFSPEAVAGRIIDSNSRLVITSDEGVRAGRSIPLKKNVDDALKNPNVTSVEHVVVLKRTGGKIDWQEGRDLWWHDQVEQASDQHQAEEMNAEDPLFILYTSGSTGKPKGVLHTTGGYLVYAALTFKYVFDYHPGDIYWCTADVGWVTGHSYLLYGPLACGATTLMFEGVPNWPTPARMAQVVDKHQVNILYTAPTAIRALMAEGDKAIEGTDRSSLRILGSVGEPINPEAWEWYWKKIGNEKCPVVDTWWQTETGGFMITPLPGATELKAGSATRPFFGVQPALVDNEGNPLEGATEGSLVITDSWPGQARTLFGDHERFEQTYFSTFKNMYFSGDGARRDEDSYYWITGRVDDVLNVSGHRLGTAEIESALVAHPKIAEAAVVGIPHNIKGQAIYAYVTLNHGEEPSPELYAEVRNWVRKEIGPLATPDVLHWTDSLPKTRSGKIMRRILRKIAAGDTSNLGDTSTLADPGVVEKLLEEKQAIAMPS.

Residues 191–194, Thr311, and Asn335 each bind CoA; that span reads RAGR. ATP-binding positions include 387–389, 411–416, Asp500, and Arg515; these read GEP and DTWWQT. A CoA-binding site is contributed by Ser523. Arg526 provides a ligand contact to ATP. Val537, His539, and Ile542 together coordinate Mg(2+). Arg584 lines the CoA pocket. Lys609 carries the post-translational modification N6-acetyllysine.

Belongs to the ATP-dependent AMP-binding enzyme family. It depends on Mg(2+) as a cofactor. Post-translationally, acetylated. Deacetylation by the SIR2-homolog deacetylase activates the enzyme.

It carries out the reaction acetate + ATP + CoA = acetyl-CoA + AMP + diphosphate. Catalyzes the conversion of acetate into acetyl-CoA (AcCoA), an essential intermediate at the junction of anabolic and catabolic pathways. Acs undergoes a two-step reaction. In the first half reaction, Acs combines acetate with ATP to form acetyl-adenylate (AcAMP) intermediate. In the second half reaction, it can then transfer the acetyl group from AcAMP to the sulfhydryl group of CoA, forming the product AcCoA. Functionally, enables the cell to use acetate during aerobic growth to generate energy via the TCA cycle, and biosynthetic compounds via the glyoxylate shunt. Acetylates CheY, the response regulator involved in flagellar movement and chemotaxis. In Escherichia coli O157:H7, this protein is Acetyl-coenzyme A synthetase.